We begin with the raw amino-acid sequence, 501 residues long: Probable malate:quinone oxidoreductase (501 aa).

It belongs to the MQO family. It depends on FAD as a cofactor.

It catalyses the reaction (S)-malate + a quinone = a quinol + oxaloacetate. The protein operates within carbohydrate metabolism; tricarboxylic acid cycle; oxaloacetate from (S)-malate (quinone route): step 1/1. This is Probable malate:quinone oxidoreductase from Mycolicibacterium paratuberculosis (strain ATCC BAA-968 / K-10) (Mycobacterium paratuberculosis).